The chain runs to 1401 residues: DNA-directed RNA polymerase subunit beta' (1401 aa).

Positions 70, 72, 85, and 88 each coordinate Zn(2+). The Mg(2+) site is built by Asp460, Asp462, and Asp464. The Zn(2+) site is built by Cys808, Cys882, Cys889, and Cys892.

The protein belongs to the RNA polymerase beta' chain family. As to quaternary structure, the RNAP catalytic core consists of 2 alpha, 1 beta, 1 beta' and 1 omega subunit. When a sigma factor is associated with the core the holoenzyme is formed, which can initiate transcription. Requires Mg(2+) as cofactor. The cofactor is Zn(2+).

The catalysed reaction is RNA(n) + a ribonucleoside 5'-triphosphate = RNA(n+1) + diphosphate. Its function is as follows. DNA-dependent RNA polymerase catalyzes the transcription of DNA into RNA using the four ribonucleoside triphosphates as substrates. The chain is DNA-directed RNA polymerase subunit beta' from Legionella pneumophila (strain Paris).